Here is a 120-residue protein sequence, read N- to C-terminus: Adult-specific rigid cuticular protein 11.9 (120 aa).

Residues 9-87 form the Chitin-binding type R&amp;R domain; it reads GGAYNFGYNT…ALAAMAPKAP (79 aa).

In terms of biological role, component of the rigid cuticle of the spider. This Araneus diadematus (European garden spider) protein is Adult-specific rigid cuticular protein 11.9.